The following is a 365-amino-acid chain: Phosphatidylcholine:ceramide cholinephosphotransferase 4 (365 aa).

The Cytoplasmic portion of the chain corresponds to 1 to 44 (MISYPFFSLSPPGLVPPPMAVPPVEMYSGSFWNRMRKPLPLRTQ). A helical transmembrane segment spans residues 45-65 (VIRFTVVFVIVSFILAVALQI). Residues 66–92 (THERMPDPKVTKPLPDLGFELLTKVPG) are Lumenal-facing. A helical transmembrane segment spans residues 93–113 (MYVLADCCIGFLNILSVFTAF). Residues 114-165 (KLYLLHRHCVGSGEPELPCNIPGVSRFFLSVWLCKENCRIELRNVHTIAWIR) are Cytoplasmic-facing. Residues 166 to 186 (FITSYALLLLFRSVVIVMTSL) form a helical membrane-spanning segment. Residues 187–229 (PAPDDLCQDPPKIENPVKNVILTVLTAGGGSIHCGDLMYSGHT) lie on the Lumenal side of the membrane. The active site involves His228. A helical transmembrane segment spans residues 230–250 (VILTLHLMFHWIYGAMVHWSF). Position 251 (Arg251) is a topological domain, cytoplasmic. Residues 252–272 (PVVTVVAIFGYYCIVASRFHY) form a helical membrane-spanning segment. Residues His271 and Asp275 contribute to the active site. Over 273–275 (TDD) the chain is Lumenal. The chain crosses the membrane as a helical span at residues 276-296 (VLVAIYLTIATFIAVGHNADG). At 297–365 (APWQLQLFIR…ALMFKCGAYV (69 aa)) the chain is on the cytoplasmic side.

This sequence belongs to the sphingomyelin synthase family.

Its subcellular location is the golgi apparatus membrane. The enzyme catalyses an N-acylsphing-4-enine + a 1,2-diacyl-sn-glycero-3-phosphocholine = a sphingomyelin + a 1,2-diacyl-sn-glycerol. Functionally, bidirectional lipid cholinephosphotransferase capable of converting phosphatidylcholine (PC) and ceramide to sphingomyelin (SM) and diacylglycerol (DAG) and vice versa. Direction is dependent on the relative concentrations of DAG and ceramide as phosphocholine acceptors. Directly and specifically recognizes the choline head group on the substrate. Also requires two fatty chains on the choline-P donor molecule in order to be recognized efficiently as a substrate. Does not function strictly as a SM synthase. Essential for viability of the pathogenic bloodstream stage of this human protozoan parasite and, consequently, can be considered as potential drug target. The protein is Phosphatidylcholine:ceramide cholinephosphotransferase 4 of Trypanosoma brucei brucei (strain 927/4 GUTat10.1).